The primary structure comprises 398 residues: Enoyl-[acyl-carrier-protein] reductase [NADH] (398 aa).

NAD(+) contacts are provided by residues 48 to 53 (GSSTGY), 74 to 75 (FE), 111 to 112 (DA), and 139 to 140 (LA). Residue Tyr-225 participates in substrate binding. Tyr-235 acts as the Proton donor in catalysis. NAD(+) is bound by residues Lys-244 and 273 to 275 (VVT).

Belongs to the TER reductase family. As to quaternary structure, monomer.

The catalysed reaction is a 2,3-saturated acyl-[ACP] + NAD(+) = a (2E)-enoyl-[ACP] + NADH + H(+). It participates in lipid metabolism; fatty acid biosynthesis. Involved in the final reduction of the elongation cycle of fatty acid synthesis (FAS II). Catalyzes the reduction of a carbon-carbon double bond in an enoyl moiety that is covalently linked to an acyl carrier protein (ACP). The sequence is that of Enoyl-[acyl-carrier-protein] reductase [NADH] from Pseudomonas paraeruginosa (strain DSM 24068 / PA7) (Pseudomonas aeruginosa (strain PA7)).